The sequence spans 781 residues: Catenin beta-1 (781 aa).

Alanine 2 is modified (N-acetylalanine). Residues 2 to 23 are interaction with VCL; the sequence is ATQADLMELDMAMEPDRKAAVS. Serine 23 is subject to Phosphoserine; by GSK3-beta; alternate. O-linked (GlcNAc) serine; alternate glycosylation is present at serine 23. The residue at position 29 (serine 29) is a Phosphoserine; by GSK3-beta. Phosphoserine; by GSK3-beta and HIPK2 occurs at positions 33 and 37. The segment at 34 to 57 is disordered; it reads GIHSGATTTAPSLSGKGNPEEEDV. Threonine 41 carries the phosphothreonine; by GSK3-beta modification. The residue at position 45 (serine 45) is a Phosphoserine. Lysine 49 carries the post-translational modification N6-acetyllysine. Tyrosine 64 carries the post-translational modification Phosphotyrosine; by PTK6. Tyrosine 142 carries the post-translational modification Phosphotyrosine; by FYN and PTK6. ARM repeat units follow at residues 151–191, 193–234, 235–276, 277–318, 319–360, 361–389, 400–441, 442–484, 489–530, 531–571, 594–636, and 637–666; these read RAIP…IMRS, QMVS…IFKS, GGIP…VRLA, GGLQ…ILAS, GGPQ…IVEA, GGMQ…RNLS, GLLG…VCQV, GGIE…AQNA, YGLP…LREQ, GAIP…EIVE, NTIP…AEGA, and TAPL…SEDK. The interval 156 to 178 is interaction with BCL9; the sequence is LTKLLNDEDQVVVNKAAVMVHQL. Serine 191 is modified (phosphoserine). Phosphoserine; by CDK5 is present on serine 246. Residues tyrosine 331 and tyrosine 333 each carry the phosphotyrosine modification. Serine 552 carries the post-translational modification Phosphoserine; by AMPK. Threonine 556 bears the Phosphothreonine mark. At cysteine 619 the chain carries S-nitrosocysteine. Residue serine 675 is modified to Phosphoserine. The segment at 720–781 is disordered; sequence HSGGYGQDAL…NQLAWFDTDL (62 aa). The span at 734–745 shows a compositional bias: basic and acidic residues; it reads MMEHEMGGHHPG. Residues 772-781 form an interaction with SCRIB region; it reads NQLAWFDTDL.

It belongs to the beta-catenin family. Two separate complex-associated pools are found in the cytoplasm. The majority is present as component of an E-cadherin/ catenin adhesion complex composed of at least E-cadherin/CDH1 and beta-catenin/CTNNB1, and possibly alpha-catenin/CTNNA1; the complex is located to adherens junctions. The stable association of CTNNA1 is controversial as CTNNA1 was shown not to bind to F-actin when assembled in the complex. Alternatively, the CTNNA1-containing complex may be linked to F-actin by other proteins such as LIMA1. Binds NHERF1. Interacts with PTPRU (via the cytoplasmic juxtamembrane domain) and with EMD. Interacts with SESTD1 and TRPC4. Interacts with CAV1. Interacts with PTPRJ. Interacts with PKT7. Interacts with FAT1 (via the cytoplasmic domain). Interacts with CDK2, NDRG2 and NANOS1. Interacts with NEK2 and CDK5. Interacts with CARM1, CXADR, PCDH11Y and PTK6. Interacts with RAPGEF2. Interacts with SOX7; this interaction may lead to proteasomal degradation of active CTNNB1 and thus inhibition of Wnt/beta-catenin-stimulated transcription. Identified in a complex with HINT1 and MITF. Interacts with FHIT. Interacts with FERMT2. Identified in a complex with TCF4 and FERMT2. Another cytoplasmic pool is part of a large complex containing AXIN1, AXIN2, APC, CSNK1A1 and GSK3B that promotes phosphorylation on N-terminal Ser and Thr residues and ubiquitination of CTNNB1 via BTRC and its subsequent degradation by the proteasome. Wnt-dependent activation of DVL antagonizes the action of GSK3B. When GSK3B activity is inhibited the complex dissociates, CTNNB1 is dephosphorylated and is no longer targeted for destruction. The stabilized protein translocates to the nucleus, where it binds TCF/LEF-1 family members, BCL9, BCL9L and possibly also RUVBL1 and CHD8. Interacts with TAX1BP3 (via the PDZ domain); this interaction inhibits the transcriptional activity of CTNNB1. Interacts with AJAP1, BAIAP1 and CTNNA3. Interacts with TRPV4; the TRPV4 and CTNNB1 complex can interact with CDH1. Interacts with VCL. The CTNNB1 and TCF4 complex interacts with PML. Interacts with XIRP1. Binds CTNNBIP and EP300. CTNNB1 forms a ternary complex with LEF1 and EP300 that is disrupted by CTNNBIP1 binding. Interacts directly with AXIN1; the interaction is regulated by CDK2 phosphorylation of AXIN1. Interacts with GLIS2. Interacts with SCRIB. Interacts with TNIK and TCF7L2. Interacts with SLC30A9. Interacts with RORA. May interact with P-cadherin/CDH3. Interacts with RNF220. Interacts with CTNND2. Interacts (via the C-terminal region) with CBY1. The complex composed, at least, of APC, CTNNB1 and GSK3B interacts with JPT1; the interaction requires the inactive form of GSK3B (phosphorylated at 'Ser-9'). Interacts with DLG5. Interacts with FAM53B; promoting translocation to the nucleus. Interacts with TMEM170B. Interacts with AHI1. Interacts with GID8. Component of an cadherin:catenin adhesion complex composed of at least of CDH26, beta-catenin/CTNNB1, alpha-catenin/CTNNA1 and p120 catenin/CTNND1. Forms a complex comprising APPL1, RUVBL2, APPL2, HDAC1 and HDAC2. Interacts with IRF2BPL; mediates the ubiquitination and degradation of CTNNB1. Interacts with AMFR. Interacts with LMBR1L. Interacts with SOX30; prevents interaction of CTNNB1 with TCF7L2/TCF4 and leads to inhibition of Wnt signaling. Interacts with SOX9; inhibiting CTNNB1 activity by competing with the binding sites of TCF/LEF within CTNNB1, thereby inhibiting the Wnt signaling. Interacts with SPN/CD43 cytoplasmic tail. Interacts (when phosphorylated at Tyr-333) with isoform M2 of PKM (PKM2); promoting transcription activation. Interacts with PKP2 (via HEAD domain). Interacts with CDH1. Interacts (when unphosphorylated) with FLYWCH1, perhaps preventing interaction of CTNNB1 with TCF4, and thereby regulating transcription activation; phosphorylation of CTNNB1 may inhibit the interaction. Interacts (via the central armadillo domains) with probable transcriptional regulator ADNP (via N-terminal region); interaction is direct and stabilizes CTNNB1 by modulating its phosphorylation by glycogen synthase kinase-3 beta GSK3B. Interacts with NR5A2. Interacts with DSG2; the interaction promotes localization of CTNNB1 at cell junctions thus reducing its nuclear localization and subsequent transcription of CTNNB1/TCF-target genes. Phosphorylation at Ser-552 by AMPK promotes stabilization of the protein, enhancing TCF/LEF-mediated transcription. Phosphorylation by GSK3B requires prior phosphorylation of Ser-45 by another kinase. Phosphorylation proceeds then from Thr-41 to Ser-37 and Ser-33. Phosphorylated by NEK2. EGF stimulates tyrosine phosphorylation. Phosphorylated on Ser-33 and Ser-37 by HIPK2 and GSK3B, this phosphorylation triggers proteasomal degradation. Phosphorylation on Ser-191 and Ser-246 by CDK5. Phosphorylation by CDK2 regulates insulin internalization. Phosphorylation by PTK6 at Tyr-64, Tyr-142, Tyr-331 and/or Tyr-333 with the predominant site at Tyr-64 is not essential for inhibition of transcriptional activity. Phosphorylation by SRC at Tyr-333 promotes interaction with isoform M2 of PKM (PKM2); promoting transcription activation. In terms of processing, ubiquitinated by the SCF(BTRC) E3 ligase complex when phosphorylated by GSK3B, leading to its degradation. Ubiquitinated by a E3 ubiquitin ligase complex containing UBE2D1, SIAH1, CACYBP/SIP, SKP1, APC and TBL1X, leading to its subsequent proteasomal degradation. Ubiquitinated and degraded following interaction with SOX9. Ubiquitinated via 'Lys-11'- and 'Lys-29'-linked ubiquitin chains by UBR5, leading to its stabilization. Post-translationally, S-nitrosylation at Cys-619 within adherens junctions promotes VEGF-induced, NO-dependent endothelial cell permeability by disrupting interaction with E-cadherin, thus mediating disassembly adherens junctions. O-glycosylation at Ser-23 decreases nuclear localization and transcriptional activity, and increases localization to the plasma membrane and interaction with E-cadherin CDH1. In terms of processing, deacetylated at Lys-49 by SIRT1. In terms of tissue distribution, expressed in cerebellar granule neurons (at protein level). Expressed in the intestinal epithelium (at protein level). Abundantly expressed in the tooth, skin, lung, kidney, eye and brain with weak expression in the liver and heart.

The protein resides in the cytoplasm. It localises to the nucleus. It is found in the cytoskeleton. The protein localises to the cell junction. Its subcellular location is the adherens junction. The protein resides in the cell membrane. It localises to the microtubule organizing center. It is found in the centrosome. The protein localises to the spindle pole. Its subcellular location is the synapse. The protein resides in the cilium basal body. Functionally, key downstream component of the canonical Wnt signaling pathway. In the absence of Wnt, forms a complex with AXIN1, AXIN2, APC, CSNK1A1 and GSK3B that promotes phosphorylation on N-terminal Ser and Thr residues and ubiquitination of CTNNB1 via BTRC and its subsequent degradation by the proteasome. In the presence of Wnt ligand, CTNNB1 is not ubiquitinated and accumulates in the nucleus, where it acts as a coactivator for transcription factors of the TCF/LEF family, leading to activate Wnt responsive genes. Also acts as a coactivator for other transcription factors, such as NR5A2. Promotes epithelial to mesenchymal transition/mesenchymal to epithelial transition (EMT/MET) via driving transcription of CTNNB1/TCF-target genes. Involved in the regulation of cell adhesion, as component of an E-cadherin:catenin adhesion complex. Acts as a negative regulator of centrosome cohesion. Involved in the CDK2/PTPN6/CTNNB1/CEACAM1 pathway of insulin internalization. Blocks anoikis of malignant kidney and intestinal epithelial cells and promotes their anchorage-independent growth by down-regulating DAPK2. Disrupts PML function and PML-NB formation by inhibiting RANBP2-mediated sumoylation of PML. Promotes neurogenesis by maintaining sympathetic neuroblasts within the cell cycle. Involved in chondrocyte differentiation via interaction with SOX9: SOX9-binding competes with the binding sites of TCF/LEF within CTNNB1, thereby inhibiting the Wnt signaling. Acts as a positive regulator of odontoblast differentiation during mesenchymal tooth germ formation, via promoting the transcription of differentiation factors such as LEF1, BMP2 and BMP4. Activity is repressed in a MSX1-mediated manner at the bell stage of mesenchymal tooth germ formation which prevents premature differentiation of odontoblasts. This chain is Catenin beta-1, found in Mus musculus (Mouse).